Reading from the N-terminus, the 223-residue chain is Ubiquitin carboxyl-terminal hydrolase isozyme L1 (223 aa).

Methionine 1 is modified (N-acetylmethionine). The UCH catalytic domain occupies glutamine 2 to lysine 221. Residues proline 5 to proline 10 are interaction with ubiquitin. The active-site Nucleophile is the cysteine 90. Serine 125 bears the Phosphoserine mark. Residue histidine 161 is the Proton donor of the active site. An interaction with ubiquitin region spans residues glutamate 211–alanine 216. Cysteine 220 carries S-farnesyl cysteine lipidation. Positions lysine 221–alanine 223 are cleaved as a propeptide — removed in mature form.

It belongs to the peptidase C12 family. Monomer. Homodimer. Interacts with COPS5 and SNCA. O-glycosylated. Expressed in the placenta at all stages of pregnancy. Expression increases as pregnancy progresses.

It localises to the cytoplasm. The protein localises to the endoplasmic reticulum membrane. The protein resides in the nucleus. It carries out the reaction Thiol-dependent hydrolysis of ester, thioester, amide, peptide and isopeptide bonds formed by the C-terminal Gly of ubiquitin (a 76-residue protein attached to proteins as an intracellular targeting signal).. Its function is as follows. Ubiquitin-protein hydrolase involved both in the processing of ubiquitin precursors and of ubiquitinated proteins. This enzyme is a thiol protease that recognizes and hydrolyzes a peptide bond at the C-terminal glycine of ubiquitin. Also binds to free monoubiquitin and may prevent its degradation in lysosomes. The homodimer may have ATP-independent ubiquitin ligase activity. In Macaca fascicularis (Crab-eating macaque), this protein is Ubiquitin carboxyl-terminal hydrolase isozyme L1 (UCHL1).